The sequence spans 233 residues: Orotidine 5'-phosphate decarboxylase (233 aa).

Substrate is bound by residues Asp11, Lys34, 61–70 (DLKLHDIPNT), Thr117, Arg179, Gln188, Gly208, and Arg209. The Proton donor role is filled by Lys63.

Belongs to the OMP decarboxylase family. Type 1 subfamily. Homodimer.

It carries out the reaction orotidine 5'-phosphate + H(+) = UMP + CO2. The protein operates within pyrimidine metabolism; UMP biosynthesis via de novo pathway; UMP from orotate: step 2/2. In terms of biological role, catalyzes the decarboxylation of orotidine 5'-monophosphate (OMP) to uridine 5'-monophosphate (UMP). This chain is Orotidine 5'-phosphate decarboxylase, found in Streptococcus pneumoniae (strain JJA).